Reading from the N-terminus, the 466-residue chain is Ribulose bisphosphate carboxylase large chain (466 aa).

N6,N6,N6-trimethyllysine is present on Lys5. Substrate contacts are provided by Asn114 and Thr164. Lys166 serves as the catalytic Proton acceptor. Residue Lys168 participates in substrate binding. Mg(2+)-binding residues include Lys192, Asp194, and Glu195. An N6-carboxylysine modification is found at Lys192. His285 (proton acceptor) is an active-site residue. The substrate site is built by Arg286, His318, and Ser370.

This sequence belongs to the RuBisCO large chain family. Type I subfamily. As to quaternary structure, heterohexadecamer of 8 large chains and 8 small chains; disulfide-linked. The disulfide link is formed within the large subunit homodimers. Mg(2+) serves as cofactor. Post-translationally, the disulfide bond which can form in the large chain dimeric partners within the hexadecamer appears to be associated with oxidative stress and protein turnover.

The protein localises to the plastid. It localises to the chloroplast. It carries out the reaction 2 (2R)-3-phosphoglycerate + 2 H(+) = D-ribulose 1,5-bisphosphate + CO2 + H2O. The enzyme catalyses D-ribulose 1,5-bisphosphate + O2 = 2-phosphoglycolate + (2R)-3-phosphoglycerate + 2 H(+). Its function is as follows. RuBisCO catalyzes two reactions: the carboxylation of D-ribulose 1,5-bisphosphate, the primary event in carbon dioxide fixation, as well as the oxidative fragmentation of the pentose substrate in the photorespiration process. Both reactions occur simultaneously and in competition at the same active site. This chain is Ribulose bisphosphate carboxylase large chain, found in Silene gallica (Common catchfly).